The sequence spans 663 residues: Oligopeptide-binding protein SarA (663 aa).

The first 22 residues, 1–22 (MKKGKILALAGVALLATGVLAA), serve as a signal peptide directing secretion. Cys23 carries N-palmitoyl cysteine lipidation. A lipid anchor (S-diacylglycerol cysteine) is attached at Cys23. The segment at 637-663 (QKAQEKWNKERAESNKKAQEELEKHVK) is disordered.

Belongs to the bacterial solute-binding protein 5 family.

It is found in the cell membrane. Its function is as follows. May be involved in the expression of cell surface properties important for colonization of the human oral cavity. It may also be involved in uptake processes. The protein is Oligopeptide-binding protein SarA (sarA) of Streptococcus gordonii (strain Challis / ATCC 35105 / BCRC 15272 / CH1 / DL1 / V288).